Here is a 64-residue protein sequence, read N- to C-terminus: Large ribosomal subunit protein bL35 (64 aa).

The disordered stretch occupies residues 27–47 (MNGSHNLEKKNRKRSRRLHQA). Positions 36 to 45 (KNRKRSRRLH) are enriched in basic residues.

This sequence belongs to the bacterial ribosomal protein bL35 family.

This Chlorobium phaeobacteroides (strain DSM 266 / SMG 266 / 2430) protein is Large ribosomal subunit protein bL35.